The primary structure comprises 200 residues: uncharacterized protein (200 aa).

3 disordered regions span residues 1-27 (MTDTRREQEKDERRKLQEQSRQNEAET), 42-79 (IPKEAKGNEPLLENYKSGLQETRKELETTPDATKSTNA), and 169-200 (HGRAGIVRNPQAAQHQRQRQMEKTGAGREHGR). The span at 187–200 (RQMEKTGAGREHGR) shows a compositional bias: basic and acidic residues.

This is an uncharacterized protein from Shigella flexneri.